Consider the following 350-residue polypeptide: Secreted effector protein PipB2 (350 aa).

Pentapeptide repeat domains lie at 162–201, 202–241, 247–286, and 287–326; these read ANLTSENLCDADLSGANLEGAVLFMADCEGANFKGANLSG, TSLGDSNFKNACLEDSIMCGATLDHANLTGANLQHASLLG, CNCSGANMDHTNLSGATLIRADMSGATLQGATIMAAIMEG, and AVLTRANLRKASFISTNLDGADLAEANLNNTCFKDCTLTD.

Interacts with the host kinesin light chain (KLC), a subunit of the kinesin-1 motor complex.

The protein localises to the secreted. It localises to the host membrane. Effector proteins function to alter host cell physiology and promote bacterial survival in host tissues. Involved in the reorganization of late endosome/lysosome (LE/Lys) compartments in mammalian cells. Necessary and sufficient to link kinesin-1 onto the Salmonella-containing vacuole (SCV) membrane. Required for centrifugal extension of lysosomal glycoprotein-rich membrane tubules, known as Salmonella-induced filaments (Sifs), away from the SCV and toward the cell periphery. Required for virulence, but not for intracellular survival and replication in phagocytic cells. This is Secreted effector protein PipB2 (pipB2) from Salmonella typhimurium (strain LT2 / SGSC1412 / ATCC 700720).